We begin with the raw amino-acid sequence, 330 residues long: ADP-L-glycero-D-manno-heptose-6-epimerase (330 aa).

NADP(+)-binding positions include 11 to 12 (FI), 32 to 33 (DN), Lys39, Lys54, 75 to 79 (EGACS), and Asn92. Tyr139 functions as the Proton acceptor in the catalytic mechanism. Lys143 is an NADP(+) binding site. Asn168 contributes to the substrate binding site. Positions 169 and 177 each coordinate NADP(+). Catalysis depends on Lys177, which acts as the Proton acceptor. Substrate-binding positions include Arg179, His186, 200–203 (FGEY), Arg213, and Tyr292.

The protein belongs to the NAD(P)-dependent epimerase/dehydratase family. HldD subfamily. In terms of assembly, homopentamer. NADP(+) is required as a cofactor.

The enzyme catalyses ADP-D-glycero-beta-D-manno-heptose = ADP-L-glycero-beta-D-manno-heptose. The protein operates within nucleotide-sugar biosynthesis; ADP-L-glycero-beta-D-manno-heptose biosynthesis; ADP-L-glycero-beta-D-manno-heptose from D-glycero-beta-D-manno-heptose 7-phosphate: step 4/4. In terms of biological role, catalyzes the interconversion between ADP-D-glycero-beta-D-manno-heptose and ADP-L-glycero-beta-D-manno-heptose via an epimerization at carbon 6 of the heptose. The polypeptide is ADP-L-glycero-D-manno-heptose-6-epimerase (Burkholderia cenocepacia (strain ATCC BAA-245 / DSM 16553 / LMG 16656 / NCTC 13227 / J2315 / CF5610) (Burkholderia cepacia (strain J2315))).